Here is a 191-residue protein sequence, read N- to C-terminus: Transcriptional activator GvpE1 (191 aa).

The interval 31–51 (SDGASDHADQPPDEGATQRYT) is disordered. DNA is bound at residue 140 to 145 (KRKVYR). The interval 150 to 181 (EGAFTRIDHMVDQLLLFSLVLKAVMTDCKARQ) is leucine-zipper.

In terms of assembly, interacts with GvpD.

The protein resides in the cytoplasm. Its activity is regulated as follows. The amount of protein that accumulates is controlled by GvpD; GvpD causes a reduction in the amount of GvpE, preventing accumulation of excessive amounts of gas vesicles. Its function is as follows. Plays a regulatory role in gas vesicle synthesis, activates transcription of the gvpA operon, and probably of the gvpD operon. Gas vesicles are hollow, gas filled proteinaceous nanostructures found in several microbial planktonic microorganisms. They allow positioning of halobacteria at the optimal depth for growth in the poorly aerated, shallow brine pools of their habitat. In terms of biological role, expression of a 9.5 kb p-vac DNA fragment containing 2 divergently transcribed regions (gvpD-gvpE-gvpF-gvpG-gvpH-gvpI-gvpJ-gvpK-gvpL-gvpM and gvpA-gvpC-gvpN-gvpO) allows H.volcanii to produce gas vesicles. A similar region restores gas vesicle production in H.halobium without the p-vac locus, but it still has the c-vac locus. The chain is Transcriptional activator GvpE1 (gvpE11) from Halobacterium salinarum (strain ATCC 700922 / JCM 11081 / NRC-1) (Halobacterium halobium).